The following is a 148-amino-acid chain: uncharacterized protein (148 aa).

The segment at 83–148 (QPAVIPPVKA…TKKSNKKTRS (66 aa)) is disordered. 2 stretches are compositionally biased toward basic residues: residues 92 to 103 (AKPKATKKKTPV) and 113 to 124 (KQTKPKQSKPKS).

This is an uncharacterized protein from Mycoplasma genitalium (strain ATCC 33530 / DSM 19775 / NCTC 10195 / G37) (Mycoplasmoides genitalium).